The following is a 229-amino-acid chain: PKHD-type hydroxylase RPA3479 (229 aa).

The 103-residue stretch at 78-180 (QIFPPLFNRY…RVASFFWLQS (103 aa)) folds into the Fe2OG dioxygenase domain. Fe cation-binding residues include His98, Asp100, and His161. Residue Arg171 participates in 2-oxoglutarate binding.

Fe(2+) serves as cofactor. It depends on L-ascorbate as a cofactor.

In Rhodopseudomonas palustris (strain ATCC BAA-98 / CGA009), this protein is PKHD-type hydroxylase RPA3479.